A 351-amino-acid polypeptide reads, in one-letter code: Mitogen-activated protein kinase 2 (351 aa).

Positions 16-304 constitute a Protein kinase domain; the sequence is YEILDVIGEG…AEEALQHNYL (289 aa). ATP contacts are provided by residues 22–30 and lysine 45; that span reads IGEGAYGIV. Aspartate 140 (proton acceptor) is an active-site residue. Threonine 176 bears the Phosphothreonine mark. A TXY motif is present at residues 176–178; sequence TEY. At tyrosine 178 the chain carries Phosphotyrosine.

The protein belongs to the protein kinase superfamily. CMGC Ser/Thr protein kinase family. MAP kinase subfamily. Mg(2+) is required as a cofactor. Requires Mn(2+) as cofactor. Post-translationally, dually phosphorylated on Thr-176 and Tyr-178, which activates the enzyme.

It is found in the nucleus. The catalysed reaction is L-seryl-[protein] + ATP = O-phospho-L-seryl-[protein] + ADP + H(+). It carries out the reaction L-threonyl-[protein] + ATP = O-phospho-L-threonyl-[protein] + ADP + H(+). With respect to regulation, activated by tyrosine and threonine phosphorylation. Inhibited by the MEK inhibitor U0126 but not by the p38 inhibitor SB203580. Cobalt abolishes kinase activity, while calcium, copper and nickel have little effect on kinase activity. Its function is as follows. Serine-threonine protein kinase which may be involved in pheromone signaling. Functionally complements the MAPK pheromone signaling pathway in S.cerevisiae. This Pneumocystis carinii protein is Mitogen-activated protein kinase 2.